Consider the following 785-residue polypeptide: E3 UFM1-protein ligase 1 homolog (785 aa).

Residues N404–T482 form a disordered region.

Belongs to the UFL1 family.

In terms of biological role, E3 UFM1-protein ligase that mediates ufmylation of target proteins. This Drosophila persimilis (Fruit fly) protein is E3 UFM1-protein ligase 1 homolog.